We begin with the raw amino-acid sequence, 238 residues long: Ribonuclease PH (238 aa).

Residues Arg86 and 124-126 each bind phosphate; that span reads GTR.

The protein belongs to the RNase PH family. In terms of assembly, homohexameric ring arranged as a trimer of dimers.

The catalysed reaction is tRNA(n+1) + phosphate = tRNA(n) + a ribonucleoside 5'-diphosphate. Its function is as follows. Phosphorolytic 3'-5' exoribonuclease that plays an important role in tRNA 3'-end maturation. Removes nucleotide residues following the 3'-CCA terminus of tRNAs; can also add nucleotides to the ends of RNA molecules by using nucleoside diphosphates as substrates, but this may not be physiologically important. Probably plays a role in initiation of 16S rRNA degradation (leading to ribosome degradation) during starvation. The chain is Ribonuclease PH from Brucella abortus (strain S19).